Consider the following 110-residue polypeptide: Small ribosomal subunit protein uS10 (110 aa).

The protein belongs to the universal ribosomal protein uS10 family. Part of the 30S ribosomal subunit.

Involved in the binding of tRNA to the ribosomes. The protein is Small ribosomal subunit protein uS10 of Coxiella burnetii (strain Dugway 5J108-111).